A 384-amino-acid chain; its full sequence is Sphingosine 1-phosphate receptor 4 (384 aa).

The Extracellular portion of the chain corresponds to methionine 1–arginine 50. Asparagine 2 and asparagine 30 each carry an N-linked (GlcNAc...) asparagine glycan. Residues glycine 51–isoleucine 71 traverse the membrane as a helical segment. The Cytoplasmic segment spans residues threonine 72–cysteine 84. The helical transmembrane segment at leucine 85–leucine 105 threads the bilayer. Topologically, residues serine 106–glutamine 117 are extracellular. A helical transmembrane segment spans residues tryptophan 118–phenylalanine 138. Topologically, residues threonine 139–arginine 161 are cytoplasmic. The helical transmembrane segment at valine 162–leucine 182 threads the bilayer. Residues glycine 183–leucine 206 are Extracellular-facing. A helical membrane pass occupies residues phenylalanine 207 to phenylalanine 227. Topologically, residues arginine 228–threonine 252 are cytoplasmic. Residues valine 253–alanine 273 traverse the membrane as a helical segment. At aspartate 274 to glycine 288 the chain is on the extracellular side. Residues methionine 289–phenylalanine 309 traverse the membrane as a helical segment. Over arginine 310–isoleucine 384 the chain is Cytoplasmic. Residue cysteine 323 is the site of S-palmitoyl cysteine attachment.

The protein belongs to the G-protein coupled receptor 1 family. As to expression, specifically expressed in fetal and adult lymphoid and hematopoietic tissue as well as in lung. Considerable level of expression in adult and fetal spleen as well as adult peripheral leukocytes and lung. Lower expression in adult thymus, lymph node, bone marrow, and appendix as well as in fetal liver, thymus, and lung.

The protein localises to the cell membrane. Receptor for the lysosphingolipid sphingosine 1-phosphate (S1P). S1P is a bioactive lysophospholipid that elicits diverse physiological effect on most types of cells and tissues. May be involved in cell migration processes that are specific for lymphocytes. This chain is Sphingosine 1-phosphate receptor 4 (S1PR4), found in Homo sapiens (Human).